A 378-amino-acid chain; its full sequence is Erythronate-4-phosphate dehydrogenase (378 aa).

Residues S45 and T66 each contribute to the substrate site. Positions 146 and 175 each coordinate NAD(+). R208 is a catalytic residue. D232 is an NAD(+) binding site. Residue E237 is part of the active site. The active-site Proton donor is H254. G257 is an NAD(+) binding site. Y258 is a binding site for substrate.

This sequence belongs to the D-isomer specific 2-hydroxyacid dehydrogenase family. PdxB subfamily. Homodimer.

It localises to the cytoplasm. The enzyme catalyses 4-phospho-D-erythronate + NAD(+) = (R)-3-hydroxy-2-oxo-4-phosphooxybutanoate + NADH + H(+). Its pathway is cofactor biosynthesis; pyridoxine 5'-phosphate biosynthesis; pyridoxine 5'-phosphate from D-erythrose 4-phosphate: step 2/5. Functionally, catalyzes the oxidation of erythronate-4-phosphate to 3-hydroxy-2-oxo-4-phosphonooxybutanoate. This chain is Erythronate-4-phosphate dehydrogenase, found in Escherichia coli O7:K1 (strain IAI39 / ExPEC).